Consider the following 515-residue polypeptide: Probable malate:quinone oxidoreductase (515 aa).

The protein belongs to the MQO family. Requires FAD as cofactor.

It carries out the reaction (S)-malate + a quinone = a quinol + oxaloacetate. The protein operates within carbohydrate metabolism; tricarboxylic acid cycle; oxaloacetate from (S)-malate (quinone route): step 1/1. This Blochmanniella pennsylvanica (strain BPEN) protein is Probable malate:quinone oxidoreductase.